Here is a 346-residue protein sequence, read N- to C-terminus: Calcium uniporter protein, mitochondrial (346 aa).

At 1–195 (MTKGKLLTTP…ECDKAAHRGA (195 aa)) the chain is on the mitochondrial matrix side. The interval 55–120 (ELPPPDPQDS…GEGKDEGEFV (66 aa)) is disordered. Basic and acidic residues-rich tracts occupy residues 76 to 91 (MEAK…KADT) and 109 to 119 (REGEGKDEGEF). The helical transmembrane segment at 196–216 (QRIALAGCGGLIGYWYIVYRL) threads the bilayer. Residues 217–226 (TFETDLGWDV) are Mitochondrial intermembrane-facing. The Selectivity filter signature appears at 224–232 (WDVMEPVTY). Residues 227–248 (MEPVTYLVGLSTLIGGYMWFLW) form a helical membrane-spanning segment. A Ca(2+)-binding site is contributed by Glu-228. Residues 249–346 (HNREVSYRSA…KEGEEDDEDD (98 aa)) are Mitochondrial matrix-facing. The segment at 306 to 346 (WNETQDEGGDEKVTKALRDERKNNNGTKNKSKEGEEDDEDD) is disordered. A compositionally biased stretch (basic and acidic residues) spans 315–328 (DEKVTKALRDERKN).

This sequence belongs to the MCU (TC 1.A.77) family. Homotetramer, assembles in a dimer or dimers configuration with two interfaces.

It is found in the mitochondrion inner membrane. The enzyme catalyses Ca(2+)(in) = Ca(2+)(out). Functionally, highly selective calcium channel localized to the inner mitochondrial membrane, which mediates calcium uptake into the mitochondrial matrix. Mitochondrial calcium homeostasis plays key roles in cellular physiology and regulates ATP production, cytoplasmic calcium signals and activation of cell death pathways. Sufficient to operate as a pore-forming channel without the need of calcium-sensor or auxiliary subunit. The polypeptide is Calcium uniporter protein, mitochondrial (Cyphellophora europaea (strain CBS 101466) (Phialophora europaea)).